The primary structure comprises 463 residues: 23S rRNA (uracil(1939)-C(5))-methyltransferase RlmD (463 aa).

The TRAM domain occupies 8-76; the sequence is RSKSATVYTF…KRFEEGELIE (69 aa). The [4Fe-4S] cluster site is built by C90, C96, C99, and C178. S-adenosyl-L-methionine-binding residues include Q288, F317, N322, E341, D368, and D389. The Nucleophile role is filled by C415.

The protein belongs to the class I-like SAM-binding methyltransferase superfamily. RNA M5U methyltransferase family. RlmD subfamily.

The catalysed reaction is uridine(1939) in 23S rRNA + S-adenosyl-L-methionine = 5-methyluridine(1939) in 23S rRNA + S-adenosyl-L-homocysteine + H(+). Catalyzes the formation of 5-methyl-uridine at position 1939 (m5U1939) in 23S rRNA. In Acinetobacter baylyi (strain ATCC 33305 / BD413 / ADP1), this protein is 23S rRNA (uracil(1939)-C(5))-methyltransferase RlmD.